We begin with the raw amino-acid sequence, 152 residues long: uncharacterized protein (152 aa).

The signal sequence occupies residues 1–23 (MYSILIACLVLLLCLVIYVGHRA).

The protein belongs to the asfivirus EP152R family.

It is found in the virion. This is an uncharacterized protein from Ornithodoros (relapsing fever ticks).